A 317-amino-acid chain; its full sequence is Iron-uptake system-binding protein (317 aa).

Residues Met-1–Ala-19 form the signal peptide. Cys-20 carries N-palmitoyl cysteine lipidation. Cys-20 is lipidated: S-diacylglycerol cysteine. The region spanning Ile-57–Asn-317 is the Fe/B12 periplasmic-binding domain.

The protein belongs to the bacterial solute-binding protein 8 family. In terms of assembly, the complex is composed of one ATP-binding protein (YusV), two transmembrane proteins (FeuB and FeuC) and a solute-binding protein (FeuA).

It is found in the cell membrane. It localises to the cytoplasm. Its subcellular location is the membrane raft. Its function is as follows. Involved in the uptake of iron. Part of the ABC transporter complex FeuABC/YusV involved in import of the catecholate siderophores bacillibactin and enterobactin. The polypeptide is Iron-uptake system-binding protein (feuA) (Bacillus subtilis (strain 168)).